Here is a 317-residue protein sequence, read N- to C-terminus: Apolipoprotein E (317 aa).

A signal peptide spans 1-18; sequence MKALWVALVVTLLAGCRA. Tandem repeats lie at residues 79–100, 101–122, 123–144, 145–166, 167–188, 189–210, 211–232, and 233–254. Positions 79 to 254 are 8 X 22 AA approximate tandem repeats; it reads ALMEETMKEV…RLDKMREQLE (176 aa). Met142 bears the Methionine sulfoxide mark. The interval 157–167 is LDL and other lipoprotein receptors binding; the sequence is HLRKLRKRLLR. 161–164 is a heparin binding site; sequence LRKR. Residues 209-289 form a lipid-binding and lipoprotein association region; it reads TATTSTLGSQ…GWFQPLVEDL (81 aa). A glycan (O-linked (GalNAc...) threonine) is linked at Thr211. Position 228 to 235 (228 to 235) interacts with heparin; that stretch reads GQKLRGRL. The segment at 265–317 is homooligomerization; that stretch reads SQMRLQAETFQARLKGWFQPLVEDLQRQWAGLVEKVQQLAVGTTPTPAASKNQ. The interval 277–289 is specificity for association with VLDL; the sequence is RLKGWFQPLVEDL. A glycan (O-linked (GalNAc...) threonine) is linked at Thr310.

The protein belongs to the apolipoprotein A1/A4/E family. As to quaternary structure, homotetramer. May interact with ABCA1; functionally associated with ABCA1 in the biogenesis of HDLs. May interact with APP/A4 amyloid-beta peptide; the interaction is extremely stable in vitro but its physiological significance is unclear. May interact with MAPT. May interact with MAP2. In the cerebrospinal fluid, interacts with secreted SORL1. Interacts with PMEL; this allows the loading of PMEL luminal fragment on ILVs to induce fibril nucleation. APOE exists as multiple glycosylated and sialylated glycoforms within cells and in plasma. The extent of glycosylation and sialylation are tissue and context specific. Post-translationally, glycated in plasma VLDL. In terms of processing, phosphorylated by FAM20C in the extracellular medium.

It localises to the secreted. The protein localises to the extracellular space. It is found in the extracellular matrix. The protein resides in the extracellular vesicle. Its subcellular location is the endosome. It localises to the multivesicular body. Its function is as follows. APOE is an apolipoprotein, a protein associating with lipid particles, that mainly functions in lipoprotein-mediated lipid transport between organs via the plasma and interstitial fluids. APOE is a core component of plasma lipoproteins and is involved in their production, conversion and clearance. Apolipoproteins are amphipathic molecules that interact both with lipids of the lipoprotein particle core and the aqueous environment of the plasma. As such, APOE associates with chylomicrons, chylomicron remnants, very low density lipoproteins (VLDL) and intermediate density lipoproteins (IDL) but shows a preferential binding to high-density lipoproteins (HDL). It also binds a wide range of cellular receptors including the LDL receptor/LDLR and the very low-density lipoprotein receptor/VLDLR that mediate the cellular uptake of the APOE-containing lipoprotein particles. Finally, APOE also has a heparin-binding activity and binds heparan-sulfate proteoglycans on the surface of cells, a property that supports the capture and the receptor-mediated uptake of APOE-containing lipoproteins by cells. The chain is Apolipoprotein E (APOE) from Camelus dromedarius (Dromedary).